We begin with the raw amino-acid sequence, 178 residues long: CASP-like protein 4D1 (178 aa).

At alanine 2 the chain carries N-acetylalanine. Topologically, residues 2–14 (APPPPAPPSVTLR) are cytoplasmic. Residues 15 to 35 (TVLLLLRVLTAAFLLITVVLI) traverse the membrane as a helical segment. The Extracellular segment spans residues 36 to 60 (STNTVTLEISSTSIKLPFNDVYAYR). Residues 61 to 81 (YMLSAAVIGLVYAVVQLFLTI) form a helical membrane-spanning segment. The Cytoplasmic segment spans residues 82 to 97 (SQFATGKTHPLTYQFD). Residues 98 to 118 (FYGDKVISYLLATGSAAGFGV) form a helical membrane-spanning segment. The Extracellular portion of the chain corresponds to 119-149 (SKDLKDTYIALIEFDSTDPVDKFFSKGYASA). The chain crosses the membrane as a helical span at residues 150–170 (SLLLFAFVSLAVLSVFSSLAL). The Cytoplasmic portion of the chain corresponds to 171-178 (SKRPVPVS).

This sequence belongs to the Casparian strip membrane proteins (CASP) family. In terms of assembly, homodimer and heterodimers. As to expression, expressed in the root epidermis.

The protein resides in the cell membrane. The sequence is that of CASP-like protein 4D1 from Arabidopsis thaliana (Mouse-ear cress).